Here is a 498-residue protein sequence, read N- to C-terminus: ATP synthase subunit beta, chloroplastic (498 aa).

Phosphothreonine is present on threonine 6. Serine 13 is subject to Phosphoserine. Glycine 172 to threonine 179 provides a ligand contact to ATP.

It belongs to the ATPase alpha/beta chains family. In terms of assembly, F-type ATPases have 2 components, CF(1) - the catalytic core - and CF(0) - the membrane proton channel. CF(1) has five subunits: alpha(3), beta(3), gamma(1), delta(1), epsilon(1). CF(0) has four main subunits: a(1), b(1), b'(1) and c(9-12).

The protein localises to the plastid. It localises to the chloroplast thylakoid membrane. The catalysed reaction is ATP + H2O + 4 H(+)(in) = ADP + phosphate + 5 H(+)(out). Its function is as follows. Produces ATP from ADP in the presence of a proton gradient across the membrane. The catalytic sites are hosted primarily by the beta subunits. This is ATP synthase subunit beta, chloroplastic from Capsella bursa-pastoris (Shepherd's purse).